Here is a 754-residue protein sequence, read N- to C-terminus: 5-methyltetrahydropteroyltriglutamate--homocysteine methyltransferase (754 aa).

Residues 15–18 and Lys114 each bind 5-methyltetrahydropteroyltri-L-glutamate; that span reads RELK. L-homocysteine contacts are provided by residues 430 to 432 and Glu483; that span reads IGS. Residues 430-432 and Glu483 each bind L-methionine; that span reads IGS. Residues 514–515 and Trp560 each bind 5-methyltetrahydropteroyltri-L-glutamate; that span reads RC. Asp598 serves as a coordination point for L-homocysteine. Residue Asp598 coordinates L-methionine. Glu604 is a binding site for 5-methyltetrahydropteroyltri-L-glutamate. Residues His641, Cys643, and Glu665 each contribute to the Zn(2+) site. His694 functions as the Proton donor in the catalytic mechanism. Cys726 is a binding site for Zn(2+).

It belongs to the vitamin-B12 independent methionine synthase family. It depends on Zn(2+) as a cofactor.

It catalyses the reaction 5-methyltetrahydropteroyltri-L-glutamate + L-homocysteine = tetrahydropteroyltri-L-glutamate + L-methionine. Its pathway is amino-acid biosynthesis; L-methionine biosynthesis via de novo pathway; L-methionine from L-homocysteine (MetE route): step 1/1. Functionally, catalyzes the transfer of a methyl group from 5-methyltetrahydrofolate to homocysteine resulting in methionine formation. The protein is 5-methyltetrahydropteroyltriglutamate--homocysteine methyltransferase of Campylobacter jejuni (strain RM1221).